The sequence spans 768 residues: DNA ligase (768 aa).

NAD(+)-binding positions include 61 to 65, 110 to 111, and E146; these read DAEFD and SL. The N6-AMP-lysine intermediate role is filled by K148. R169, E206, K322, and K346 together coordinate NAD(+). Zn(2+)-binding residues include C443, C446, C462, and C468. Positions 661–750 constitute a BRCT domain; the sequence is SVPRTLEGLT…PAQTGTEAEA (90 aa). A disordered region spans residues 739–768; sequence NGPAQTGTEAEAATDEATVVDETAAEAATE. Residues 746 to 768 show a composition bias toward low complexity; it reads TEAEAATDEATVVDETAAEAATE.

The protein belongs to the NAD-dependent DNA ligase family. LigA subfamily. Mg(2+) is required as a cofactor. Mn(2+) serves as cofactor.

The enzyme catalyses NAD(+) + (deoxyribonucleotide)n-3'-hydroxyl + 5'-phospho-(deoxyribonucleotide)m = (deoxyribonucleotide)n+m + AMP + beta-nicotinamide D-nucleotide.. Its function is as follows. DNA ligase that catalyzes the formation of phosphodiester linkages between 5'-phosphoryl and 3'-hydroxyl groups in double-stranded DNA using NAD as a coenzyme and as the energy source for the reaction. It is essential for DNA replication and repair of damaged DNA. This Paenarthrobacter aurescens (strain TC1) protein is DNA ligase.